The following is a 404-amino-acid chain: Argininosuccinate synthase (404 aa).

ATP-binding positions include 12–20 (AYSGGLDTS) and alanine 39. L-citrulline contacts are provided by tyrosine 90 and serine 95. ATP is bound at residue glycine 120. Residues threonine 122, asparagine 126, and aspartate 127 each coordinate L-aspartate. Asparagine 126 provides a ligand contact to L-citrulline. Residues arginine 130, serine 181, serine 190, glutamate 266, and tyrosine 278 each coordinate L-citrulline.

It belongs to the argininosuccinate synthase family. Type 1 subfamily. In terms of assembly, homotetramer.

Its subcellular location is the cytoplasm. The catalysed reaction is L-citrulline + L-aspartate + ATP = 2-(N(omega)-L-arginino)succinate + AMP + diphosphate + H(+). It functions in the pathway amino-acid biosynthesis; L-arginine biosynthesis; L-arginine from L-ornithine and carbamoyl phosphate: step 2/3. The protein is Argininosuccinate synthase of Rhodospirillum rubrum (strain ATCC 11170 / ATH 1.1.1 / DSM 467 / LMG 4362 / NCIMB 8255 / S1).